The chain runs to 348 residues: Lipoyl synthase (348 aa).

Residues Cys-55, Cys-60, Cys-66, Cys-81, Cys-85, Cys-88, and Ser-292 each contribute to the [4Fe-4S] cluster site. The region spanning 67 to 281 is the Radical SAM core domain; that stretch reads WESREATFLI…ADAAKEMGFA (215 aa).

This sequence belongs to the radical SAM superfamily. Lipoyl synthase family. [4Fe-4S] cluster is required as a cofactor.

The protein localises to the cytoplasm. It carries out the reaction [[Fe-S] cluster scaffold protein carrying a second [4Fe-4S](2+) cluster] + N(6)-octanoyl-L-lysyl-[protein] + 2 oxidized [2Fe-2S]-[ferredoxin] + 2 S-adenosyl-L-methionine + 4 H(+) = [[Fe-S] cluster scaffold protein] + N(6)-[(R)-dihydrolipoyl]-L-lysyl-[protein] + 4 Fe(3+) + 2 hydrogen sulfide + 2 5'-deoxyadenosine + 2 L-methionine + 2 reduced [2Fe-2S]-[ferredoxin]. It participates in protein modification; protein lipoylation via endogenous pathway; protein N(6)-(lipoyl)lysine from octanoyl-[acyl-carrier-protein]: step 2/2. In terms of biological role, catalyzes the radical-mediated insertion of two sulfur atoms into the C-6 and C-8 positions of the octanoyl moiety bound to the lipoyl domains of lipoate-dependent enzymes, thereby converting the octanoylated domains into lipoylated derivatives. This Corynebacterium glutamicum (strain R) protein is Lipoyl synthase.